The primary structure comprises 190 residues: Interferon alpha-11 (190 aa).

A signal peptide spans 1-23 (MARLCAFLMILIVMSYWSTCSLG). Intrachain disulfides connect cysteine 24/cysteine 122 and cysteine 52/cysteine 162. An N-linked (GlcNAc...) asparagine glycan is attached at asparagine 101.

This sequence belongs to the alpha/beta interferon family. N-glycosylated.

It is found in the secreted. Functionally, has antiviral and antiproliferative activities. Produced by macrophages and stimulates the production of two enzymes: a protein kinase and an oligoadenylate synthetase. During viral infection, mediates antiviral effect, either directly by inducing interferon-stimulated genes, either indirectly through stimulation of natural killer cells enabling them to control viral replication. The sequence is that of Interferon alpha-11 (Ifna11) from Mus musculus (Mouse).